Reading from the N-terminus, the 100-residue chain is Small ribosomal subunit protein uS14c (100 aa).

A disordered region spans residues methionine 1–isoleucine 31.

This sequence belongs to the universal ribosomal protein uS14 family. Part of the 30S ribosomal subunit.

It is found in the plastid. The protein localises to the chloroplast. Binds 16S rRNA, required for the assembly of 30S particles. The protein is Small ribosomal subunit protein uS14c of Nicotiana tomentosiformis (Tobacco).